A 375-amino-acid chain; its full sequence is Carboxypeptidase O (375 aa).

The signal sequence occupies residues 1 to 20 (MKPLLGTFYLLGMLVPGWLG). A Peptidase M14 domain is found at 50 to 345 (RYHPMGEIYQ…EAVLSVLDDV (296 aa)). Zn(2+) contacts are provided by His109 and Glu112. N-linked (GlcNAc...) asparagine glycosylation is present at Asn175. His237 contributes to the Zn(2+) binding site. The N-linked (GlcNAc...) asparagine glycan is linked to Asn252. The Proton donor/acceptor role is filled by Glu311. A glycan (N-linked (GlcNAc...) asparagine) is linked at Asn315. The GPI-anchor amidated serine moiety is linked to residue Ser354. Positions 355 to 375 (ARKAKSTALVLGLLMSFMSLL) are cleaved as a propeptide — removed in mature form.

This sequence belongs to the peptidase M14 family. The cofactor is Zn(2+).

Its subcellular location is the apical cell membrane. In terms of biological role, carboxypeptidase which preferentially cleaves C-terminal acidic residues from peptides and proteins. Can also cleave C-terminal hydrophobic amino acids, with a preference for small residues over large residues. The sequence is that of Carboxypeptidase O from Bos taurus (Bovine).